The following is a 225-amino-acid chain: uncharacterized protein (225 aa).

N-linked (GlcNAc...) asparagine; by host glycosylation is found at Asn48, Asn58, Asn105, and Asn108. A helical membrane pass occupies residues 156–178 (LWGYLKQPLVMVGIAAVVGYLIY).

It belongs to the ascovirus HvAv ORF58 family.

The protein resides in the membrane. This is an uncharacterized protein from Heliothis virescens ascovirus 3e (HvAV-3e).